Consider the following 110-residue polypeptide: Late cornified envelope protein 1A (110 aa).

Residues 1–10 (MSCQQSQQQC) are compositionally biased toward low complexity. Disordered stretches follow at residues 1–23 (MSCQQSQQQCQPPPKCTPKCPPK) and 83–110 (QSSGCCSQPSGGSSCCGGDSGQHSGGCC). Over residues 11–23 (QPPPKCTPKCPPK) the composition is skewed to pro residues. Residues 83–95 (QSSGCCSQPSGGS) show a composition bias toward low complexity. The segment covering 96–110 (SCCGGDSGQHSGGCC) has biased composition (gly residues).

It belongs to the LCE family. In terms of assembly, interacts with CYSRT1. Skin-specific. Expression was readily detected in adult trunk skin, adult arm skin, fetal skin, penal skin, vulva, esophagus and tongue. Not expressed in the cervix, rectum, lung, colon, or placenta.

Functionally, precursors of the cornified envelope of the stratum corneum. This chain is Late cornified envelope protein 1A (LCE1A), found in Homo sapiens (Human).